A 609-amino-acid polypeptide reads, in one-letter code: Major facilitator superfamily domain-containing protein 6-like protein A (609 aa).

A run of 2 helical transmembrane segments spans residues 41–61 and 78–98; these read LGLG…VHLL and FFIM…AYYP. The disordered stretch occupies residues 201–241; that stretch reads SGKAQKVMSSKSAASNSKQRSSLNNHTSPYATHPNVSHHPS. A compositionally biased stretch (polar residues) spans 207-230; the sequence is VMSSKSAASNSKQRSSLNNHTSPY. The next 9 helical transmembrane spans lie at 265–285, 307–327, 340–360, 388–408, 420–440, 452–472, 475–495, 513–535, and 541–561; these read IFLI…PLEW, LWIW…FLVD, VFFH…LSTL, IVLT…TQNF, ELYM…LYFF, WMVA…SFLW, WSVL…WWAI, LALR…GFII, and AVLY…FLLV.

It belongs to the major facilitator superfamily. MFSD6 family.

Its subcellular location is the membrane. This is Major facilitator superfamily domain-containing protein 6-like protein A (mfsd6l-a) from Xenopus laevis (African clawed frog).